A 153-amino-acid polypeptide reads, in one-letter code: Arginine repressor (153 aa).

Belongs to the ArgR family.

It is found in the cytoplasm. It functions in the pathway amino-acid biosynthesis; L-arginine biosynthesis [regulation]. In terms of biological role, regulates arginine biosynthesis genes. This chain is Arginine repressor, found in Syntrophomonas wolfei subsp. wolfei (strain DSM 2245B / Goettingen).